A 1969-amino-acid polypeptide reads, in one-letter code: Echinoderm microtubule-associated protein-like 5 (1969 aa).

WD repeat units lie at residues 59–100, 104–145, 148–187, 195–233, 235–273, 280–321, 323–362, 406–445, 449–488, and 561–601; these read GHSD…TISV, VHTH…MLSM, GHTD…LTPK, GDLQ…RTIQ, AHAA…TVID, GYKG…LIMQ, HCEG…LIAR, DRKE…KKVG, GSLS…EVTS, and GHSA…KLKD. The interval 609 to 633 is disordered; it reads ESLADSHSDESDSDLSDVPELDSEI. Positions 619 to 633 are enriched in acidic residues; sequence SDSDLSDVPELDSEI. 9 WD repeats span residues 725 to 766, 770 to 811, 814 to 853, 861 to 900, 901 to 940, 996 to 1035, 1038 to 1077, 1080 to 1120, and 1236 to 1276; these read GHDD…PLSI, HHQY…KLSI, GSKD…LIGR, GKND…KTVK, AHDG…KTYA, HMEG…CMLA, KLKK…DLVS, HRKD…RVGI, and AHST…YREK. 2 disordered regions span residues 1274–1297 and 1326–1355; these read REKR…YDSD and QQKE…NVGK. The span at 1281-1294 shows a compositional bias: acidic residues; it reads SEESDIDSEEDGGY. Over residues 1326–1337 the composition is skewed to basic and acidic residues; the sequence is QQKEPSIDERPP. 10 WD repeats span residues 1412–1463, 1467–1508, 1511–1550, 1560–1598, 1600–1646, 1691–1731, 1733–1774, 1775–1814, 1887–1926, and 1932–1969; these read EHND…TLSI, YHSK…KIAS, GHNQ…LLSK, ARMQ…RIVA, AHNG…RAFR, GHVD…MLNK, NLGH…GKKR, DRRC…TLNR, AEKA…KFAK, and GHSP…HTPH.

This sequence belongs to the WD repeat EMAP family.

Its subcellular location is the cytoplasm. The protein resides in the cytoskeleton. Functionally, may modify the assembly dynamics of microtubules, such that microtubules are slightly longer, but more dynamic. The protein is Echinoderm microtubule-associated protein-like 5 (EML5) of Homo sapiens (Human).